Consider the following 788-residue polypeptide: MRCDNNYSFSILFSLLLILILDSKVVSLSTSCQSKSVCGNINIPYPFGIEKGCYLNEWYKIECKNATYPFLFKMGMAVVNISLPGDDGYNNPVSYGSIRVKIPITSIGCSRDGKESGSVLNFTDSPFYFGIGNSLVAVGCNSKASLTNINPSKVGCELNCTASKETLPSKSIPFFDKTGCSNNKLPYYSSLCTKNNGEDERSCDGNGCCIAGLLDSEAPQVIGINIESFDHGNSTKLECRVAFLTDDVSPFSNASEPKRLFAKRYATVSLGWVIQTKNLSFVNSLSCKNTKEYDNSTYNIKLVTSCICNNVTISGTDYANCGCSQGYEGNPYLPGGCKDINECLRNSYGQRQNCRESDTCVNLPGTFNCIGNKTRVTMIGVGSAFGILVLVVGIWWLRKFLKKRRMSKRKRKFFKRNGGLLLQQQLNTNKGNVEKTRIFSSRELEKATDNFSESRILGQGGQGTVYKGMLVDGRTVAVKKSKVVDEDKLEEFINEVVILSQINHRHVVKLLGCCLETEVPTLVYEFIPNGNLFQHIHEESDDYTKTWGMRLRIAVDIAGALSYLHSAASSPIYHRDIKSTNILLDEKYRTKVSDFGTSRSVTIDHTHWTTVISGTVGYVDPEYYGSSQYTDKSDVYSFGVVLVELITGEKPVITVSNSQEIRGLADHFRVAMKENRFFEIMDARIRDGCKPEQVMAVANLARRCLNSKGKKRPCMRKVFTDLEKILASQEDSLVNIENDDGADDEEEGMTMINIDDSQTIYVTAPAPSIVASSSSSDVQPLFPHPTWI.

The N-terminal stretch at 1-27 (MRCDNNYSFSILFSLLLILILDSKVVS) is a signal peptide. The Extracellular portion of the chain corresponds to 28-375 (LSTSCQSKSV…TFNCIGNKTR (348 aa)). Asn-65, Asn-80, Asn-121, Asn-159, Asn-233, Asn-253, Asn-278, Asn-295, and Asn-310 each carry an N-linked (GlcNAc...) asparagine glycan. An atypical EGF-like region spans residues 306 to 369 (CICNNVTISG…CVNLPGTFNC (64 aa)). 3 cysteine pairs are disulfide-bonded: Cys-308/Cys-321, Cys-343/Cys-360, and Cys-354/Cys-369. Asn-372 is a glycosylation site (N-linked (GlcNAc...) asparagine). Residues 376-396 (VTMIGVGSAFGILVLVVGIWW) traverse the membrane as a helical segment. Residues 397 to 788 (LRKFLKKRRM…QPLFPHPTWI (392 aa)) lie on the Cytoplasmic side of the membrane. Residues 451 to 726 (FSESRILGQG…KVFTDLEKIL (276 aa)) form the Protein kinase domain. ATP is bound by residues 457 to 465 (LGQGGQGTV) and Lys-479. Tyr-524 is modified (phosphotyrosine). Residue Asp-576 is the Proton acceptor of the active site. Thr-610 and Thr-615 each carry phosphothreonine. Residue Tyr-623 is modified to Phosphotyrosine.

The protein belongs to the protein kinase superfamily. Ser/Thr protein kinase family.

Its subcellular location is the membrane. It catalyses the reaction L-seryl-[protein] + ATP = O-phospho-L-seryl-[protein] + ADP + H(+). It carries out the reaction L-threonyl-[protein] + ATP = O-phospho-L-threonyl-[protein] + ADP + H(+). Functionally, putative serine/threonine-protein kinase that may function as a signaling receptor of extracellular matrix component. This is Putative wall-associated receptor kinase-like 11 (WAKL11) from Arabidopsis thaliana (Mouse-ear cress).